Here is a 248-residue protein sequence, read N- to C-terminus: Probable transcriptional regulatory protein Pfl01_4410 (248 aa).

The protein belongs to the TACO1 family.

The protein localises to the cytoplasm. This Pseudomonas fluorescens (strain Pf0-1) protein is Probable transcriptional regulatory protein Pfl01_4410.